Here is a 313-residue protein sequence, read N- to C-terminus: Putative HTH-type transcriptional regulatory protein Msm_0453 (313 aa).

Residues 131–189 enclose the HTH cro/C1-type domain; it reads IKQYREEYSLSLKDLADLAHVSRATMYKYENEIVRANTETAMILEEILNTKVTLDIDLL. The H-T-H motif DNA-binding region spans 142-161; sequence LKDLADLAHVSRATMYKYEN.

This is Putative HTH-type transcriptional regulatory protein Msm_0453 from Methanobrevibacter smithii (strain ATCC 35061 / DSM 861 / OCM 144 / PS).